A 290-amino-acid polypeptide reads, in one-letter code: UPF0046 protein K07C11.7 (290 aa).

The N-terminal stretch at 1–22 is a signal peptide; it reads MFHFSIGTVLISICWLAQWMEA. Asn204 is a glycosylation site (N-linked (GlcNAc...) asparagine).

This sequence belongs to the UPF0046 family.

In Caenorhabditis elegans, this protein is UPF0046 protein K07C11.7.